Reading from the N-terminus, the 397-residue chain is MTATDPVANLQTLIRCPSVTPAEGGALTALDAMLTPLGFTVDRVTAREEGTAAIENLYARLGRDGPHLMFAGHTDVVPVGDEAAWTHPPFAAEISNGELFGRGAVDMKGGIACFVAAVARHIEKSGPPAGSISFLVTGDEEGPAINGTIKLLQWAAERGERWDACLVGEPTNPDRLGDMIKIGRRGSLSGKITVHGVQGHAAYPHLADNPVRGLLQLTQALMDPPFDGGTDDFQPSNLEVTTVDVGNPATNVIPAKASASFNIRFNDSWTVETLRAEILRRLEAAAGNGQLRPGRPPAKYDIVWADRPSHVFLTRNNALIASLSSAIESVAGRSPALSTTGGTSDARFIKDYCPVVEFGLVGQTMHMVDERVAVADLETLTAIYQTFIDRWFAHAGS.

Position 73 (His-73) interacts with Zn(2+). Asp-75 is a catalytic residue. Asp-106 serves as a coordination point for Zn(2+). Glu-140 serves as the catalytic Proton acceptor. Residues Glu-141, Glu-169, and His-366 each coordinate Zn(2+).

Belongs to the peptidase M20A family. DapE subfamily. In terms of assembly, homodimer. It depends on Zn(2+) as a cofactor. Co(2+) is required as a cofactor.

The catalysed reaction is N-succinyl-(2S,6S)-2,6-diaminopimelate + H2O = (2S,6S)-2,6-diaminopimelate + succinate. The protein operates within amino-acid biosynthesis; L-lysine biosynthesis via DAP pathway; LL-2,6-diaminopimelate from (S)-tetrahydrodipicolinate (succinylase route): step 3/3. In terms of biological role, catalyzes the hydrolysis of N-succinyl-L,L-diaminopimelic acid (SDAP), forming succinate and LL-2,6-diaminopimelate (DAP), an intermediate involved in the bacterial biosynthesis of lysine and meso-diaminopimelic acid, an essential component of bacterial cell walls. The protein is Succinyl-diaminopimelate desuccinylase of Rhizobium etli (strain ATCC 51251 / DSM 11541 / JCM 21823 / NBRC 15573 / CFN 42).